Reading from the N-terminus, the 135-residue chain is Nucleoside diphosphate kinase (135 aa).

Residues K9, Y57, R85, T91, R102, and N112 each coordinate ATP. H115 serves as the catalytic Pros-phosphohistidine intermediate.

It belongs to the NDK family. Homotetramer. Mg(2+) is required as a cofactor.

Its subcellular location is the cytoplasm. It catalyses the reaction a 2'-deoxyribonucleoside 5'-diphosphate + ATP = a 2'-deoxyribonucleoside 5'-triphosphate + ADP. It carries out the reaction a ribonucleoside 5'-diphosphate + ATP = a ribonucleoside 5'-triphosphate + ADP. Major role in the synthesis of nucleoside triphosphates other than ATP. The ATP gamma phosphate is transferred to the NDP beta phosphate via a ping-pong mechanism, using a phosphorylated active-site intermediate. This chain is Nucleoside diphosphate kinase, found in Thermoanaerobacter pseudethanolicus (strain ATCC 33223 / 39E) (Clostridium thermohydrosulfuricum).